A 211-amino-acid chain; its full sequence is Imidazole glycerol phosphate synthase subunit HisH (211 aa).

Residues 5 to 211 enclose the Glutamine amidotransferase type-1 domain; the sequence is SVALLDYGSG…QLLRNWVDSL (207 aa). Residue C83 is the Nucleophile of the active site. Catalysis depends on residues H192 and E194.

In terms of assembly, heterodimer of HisH and HisF.

Its subcellular location is the cytoplasm. It carries out the reaction 5-[(5-phospho-1-deoxy-D-ribulos-1-ylimino)methylamino]-1-(5-phospho-beta-D-ribosyl)imidazole-4-carboxamide + L-glutamine = D-erythro-1-(imidazol-4-yl)glycerol 3-phosphate + 5-amino-1-(5-phospho-beta-D-ribosyl)imidazole-4-carboxamide + L-glutamate + H(+). It catalyses the reaction L-glutamine + H2O = L-glutamate + NH4(+). It participates in amino-acid biosynthesis; L-histidine biosynthesis; L-histidine from 5-phospho-alpha-D-ribose 1-diphosphate: step 5/9. Its function is as follows. IGPS catalyzes the conversion of PRFAR and glutamine to IGP, AICAR and glutamate. The HisH subunit catalyzes the hydrolysis of glutamine to glutamate and ammonia as part of the synthesis of IGP and AICAR. The resulting ammonia molecule is channeled to the active site of HisF. This is Imidazole glycerol phosphate synthase subunit HisH from Nocardia farcinica (strain IFM 10152).